The primary structure comprises 425 residues: Serine hydroxymethyltransferase (425 aa).

(6S)-5,6,7,8-tetrahydrofolate is bound by residues L120 and 124 to 126 (GHL). K229 is modified (N6-(pyridoxal phosphate)lysine). 353 to 355 (SPF) serves as a coordination point for (6S)-5,6,7,8-tetrahydrofolate.

The protein belongs to the SHMT family. As to quaternary structure, homodimer. Pyridoxal 5'-phosphate serves as cofactor.

It localises to the cytoplasm. It catalyses the reaction (6R)-5,10-methylene-5,6,7,8-tetrahydrofolate + glycine + H2O = (6S)-5,6,7,8-tetrahydrofolate + L-serine. It participates in one-carbon metabolism; tetrahydrofolate interconversion. The protein operates within amino-acid biosynthesis; glycine biosynthesis; glycine from L-serine: step 1/1. Functionally, catalyzes the reversible interconversion of serine and glycine with tetrahydrofolate (THF) serving as the one-carbon carrier. This reaction serves as the major source of one-carbon groups required for the biosynthesis of purines, thymidylate, methionine, and other important biomolecules. Also exhibits THF-independent aldolase activity toward beta-hydroxyamino acids, producing glycine and aldehydes, via a retro-aldol mechanism. The polypeptide is Serine hydroxymethyltransferase (Thermosynechococcus vestitus (strain NIES-2133 / IAM M-273 / BP-1)).